The primary structure comprises 149 residues: Transcription factor HY5-like (149 aa).

A disordered region spans residues 1–77; that stretch reads MSLQRPNGNS…RRRGRNPVDK (77 aa). Residues 23-36 form an interaction with COP1 region; it reads ESDEELLMVPDMEA. Residue Ser-24 is modified to Phosphoserine. A compositionally biased stretch (polar residues) spans 55 to 64; it reads ELDQTQNGVS. A bZIP domain is found at 78–141; it reads EYRSLKRLLR…TMLRKMLINT (64 aa). Residues 80–100 are basic motif; it reads RSLKRLLRNRVSAQQARERKK. A leucine-zipper region spans residues 106–134; sequence LESRANELQNNNDQLEEKISTLTNENTML.

The protein belongs to the bZIP family. As to quaternary structure, heterodimer; heterodimerizes with HY5 via the leucine-zipper domains. Interacts with COP1 WD40 domain. Interacts with BBX24/STO and BBX25/STH. Post-translationally, ubiquitinated by COP1. Ubiquitination takes place in darkness and leads to its subsequent degradation, thereby preventing the activation of photomorphogenesis signals.

The protein resides in the nucleus. Transcription factor that promotes photomorphogenesis in light. Acts downstream of the light receptor network and directly affects transcription of light-induced genes. Specifically involved in the blue light specific pathway, suggesting that it participates in transmission of cryptochromes (CRY1 and CRY2) signals to downstream responses. In darkness, its degradation prevents the activation of light-induced genes. The protein is Transcription factor HY5-like (HYH) of Arabidopsis thaliana (Mouse-ear cress).